Consider the following 331-residue polypeptide: Protein mono-ADP-ribosyltransferase PARP11 (331 aa).

Lys-11 carries the N6-(ADP-ribosyl)lysine modification. A WWE domain is found at 15–99; the sequence is SDVDDMDTSD…VTGKQRLIKR (85 aa). Cys-49 and Cys-65 each carry ADP-ribosylcysteine. Asp-80 carries the post-translational modification ADP-ribosyl aspartic acid. Residues 116–331 form the PARP catalytic domain; sequence IPMPTHWENV…IYPEYLIDFH (216 aa).

This sequence belongs to the ARTD/PARP family. In terms of processing, auto-mono-ADP-ribosylated. In terms of tissue distribution, predominantly expressed in testis, preferentially in postmeiotic germ cells. Also detectable in other tissues, including liver, lung, spleen, thymus and brain.

It localises to the nucleus. The protein localises to the nuclear pore complex. The catalysed reaction is L-aspartyl-[protein] + NAD(+) = 4-O-(ADP-D-ribosyl)-L-aspartyl-[protein] + nicotinamide. The enzyme catalyses L-cysteinyl-[protein] + NAD(+) = S-(ADP-D-ribosyl)-L-cysteinyl-[protein] + nicotinamide + H(+). It catalyses the reaction L-glutamyl-[protein] + NAD(+) = 5-O-(ADP-D-ribosyl)-L-glutamyl-[protein] + nicotinamide. It carries out the reaction L-lysyl-[protein] + NAD(+) = N(6)-(ADP-D-ribosyl)-L-lysyl-[protein] + nicotinamide + H(+). Functionally, mono-ADP-ribosyltransferase that mediates mono-ADP-ribosylation of target proteins. Plays a role in nuclear envelope stability and nuclear remodeling during spermiogenesis. Inhibits the type I interferon activated signaling pathway. Mechanistically, mono-ADP-ribosylates beta-TrCP/BTRC to promote IFNAR1 ubiquitination and protect BTRC from ubiquitin-proteasome degradation. This is Protein mono-ADP-ribosyltransferase PARP11 from Mus musculus (Mouse).